The following is a 774-amino-acid chain: Polyribonucleotide nucleotidyltransferase (774 aa).

Positions 485 and 491 each coordinate Mg(2+). The region spanning 552–611 (PRIETMSVPKDKIRDIIGTGGKIIREIVATTGAKVDIDDDGTVKISSSDTAQIEAARNWI) is the KH domain. The 69-residue stretch at 621-689 (GKIYTGKVVN…NRGKVRLSMR (69 aa)) folds into the S1 motif domain. The tract at residues 689–774 (RVVDQETGEE…APAFLTRDDD (86 aa)) is disordered. Positions 700–755 (PDTRPPREERPRGDRGDRGDRGPRRDGDRRREGGDRGPRRDRGDRGDRPRRERSEG) are enriched in basic and acidic residues.

Belongs to the polyribonucleotide nucleotidyltransferase family. Mg(2+) is required as a cofactor.

The protein resides in the cytoplasm. The enzyme catalyses RNA(n+1) + phosphate = RNA(n) + a ribonucleoside 5'-diphosphate. Involved in mRNA degradation. Catalyzes the phosphorolysis of single-stranded polyribonucleotides processively in the 3'- to 5'-direction. In Rhizorhabdus wittichii (strain DSM 6014 / CCUG 31198 / JCM 15750 / NBRC 105917 / EY 4224 / RW1) (Sphingomonas wittichii), this protein is Polyribonucleotide nucleotidyltransferase.